A 343-amino-acid polypeptide reads, in one-letter code: Heat-inducible transcription repressor HrcA (343 aa).

The protein belongs to the HrcA family.

In terms of biological role, negative regulator of class I heat shock genes (grpE-dnaK-dnaJ and groELS operons). Prevents heat-shock induction of these operons. This chain is Heat-inducible transcription repressor HrcA, found in Mycoplasma genitalium (strain ATCC 33530 / DSM 19775 / NCTC 10195 / G37) (Mycoplasmoides genitalium).